Here is a 213-residue protein sequence, read N- to C-terminus: ATP synthase subunit b 2 (213 aa).

A disordered region spans residues 1-45; the sequence is MFVTEAYAQSAPTVGETHTETPAVGQPQPEATHTETGVAHGAEHG. Residues 57-76 traverse the membrane as a helical segment; it reads TYASQVLWLAITFGLFYLLM.

It belongs to the ATPase B chain family. As to quaternary structure, F-type ATPases have 2 components, F(1) - the catalytic core - and F(0) - the membrane proton channel. F(1) has five subunits: alpha(3), beta(3), gamma(1), delta(1), epsilon(1). F(0) has three main subunits: a(1), b(2) and c(10-14). The alpha and beta chains form an alternating ring which encloses part of the gamma chain. F(1) is attached to F(0) by a central stalk formed by the gamma and epsilon chains, while a peripheral stalk is formed by the delta and b chains.

Its subcellular location is the cell inner membrane. Its function is as follows. F(1)F(0) ATP synthase produces ATP from ADP in the presence of a proton or sodium gradient. F-type ATPases consist of two structural domains, F(1) containing the extramembraneous catalytic core and F(0) containing the membrane proton channel, linked together by a central stalk and a peripheral stalk. During catalysis, ATP synthesis in the catalytic domain of F(1) is coupled via a rotary mechanism of the central stalk subunits to proton translocation. Functionally, component of the F(0) channel, it forms part of the peripheral stalk, linking F(1) to F(0). The b'-subunit is a diverged and duplicated form of b found in plants and photosynthetic bacteria. The sequence is that of ATP synthase subunit b 2 (atpF2) from Agrobacterium fabrum (strain C58 / ATCC 33970) (Agrobacterium tumefaciens (strain C58)).